The sequence spans 55 residues: Conotoxin Cal14.14 (55 aa).

Residues 1–20 form the signal peptide; the sequence is MFRLGVFLLTFLLLVSMATS. Intrachain disulfides connect Cys-34–Cys-48 and Cys-38–Cys-52.

In terms of tissue distribution, expressed by the venom duct.

Its subcellular location is the secreted. Its function is as follows. Probable neurotoxin. The protein is Conotoxin Cal14.14 of Californiconus californicus (California cone).